Reading from the N-terminus, the 431-residue chain is Chorismate synthase 2, chloroplastic (431 aa).

Residues 1–48 constitute a chloroplast transit peptide; the sequence is MASSMLTKQFLGAPFSSFGSGQQPSKLCSSNLRFPTHRSQPKRLEIQA. The disordered stretch occupies residues 93-141; sequence DRRRPGQSRITTPRKETDTCKISSGTADGLTTGSPIKVEVPNTDQRGND. A compositionally biased stretch (polar residues) spans 112-126; sequence CKISSGTADGLTTGS.

Belongs to the chorismate synthase family. As to quaternary structure, homotetramer. The cofactor is FMNH2. Predominantly expressed in flowers and roots and, to a lesser extent, in stems, leaves, and cotyledons.

It is found in the plastid. The protein localises to the chloroplast. The catalysed reaction is 5-O-(1-carboxyvinyl)-3-phosphoshikimate = chorismate + phosphate. It participates in metabolic intermediate biosynthesis; chorismate biosynthesis; chorismate from D-erythrose 4-phosphate and phosphoenolpyruvate: step 7/7. In terms of biological role, catalyzes the last common step of the biosynthesis of aromatic amino acids, produced via the shikimic acid pathway. The chain is Chorismate synthase 2, chloroplastic (CS2) from Solanum lycopersicum (Tomato).